A 436-amino-acid polypeptide reads, in one-letter code: Adenylosuccinate synthetase (436 aa).

Residues 12–18 (GDEGKGK) and 40–42 (GHT) contribute to the GTP site. The active-site Proton acceptor is Asp-13. Positions 13 and 40 each coordinate Mg(2+). IMP contacts are provided by residues 13 to 16 (DEGK), 38 to 41 (NAGH), Thr-130, Arg-144, Gln-230, Thr-245, and Arg-309. The active-site Proton donor is the His-41. 305–311 (TTTGRPR) lines the substrate pocket. GTP is bound by residues Arg-311, 337–339 (KLD), and 419–421 (SVG).

The protein belongs to the adenylosuccinate synthetase family. As to quaternary structure, homodimer. Requires Mg(2+) as cofactor.

Its subcellular location is the cytoplasm. It catalyses the reaction IMP + L-aspartate + GTP = N(6)-(1,2-dicarboxyethyl)-AMP + GDP + phosphate + 2 H(+). The protein operates within purine metabolism; AMP biosynthesis via de novo pathway; AMP from IMP: step 1/2. Its function is as follows. Plays an important role in the de novo pathway of purine nucleotide biosynthesis. Catalyzes the first committed step in the biosynthesis of AMP from IMP. The sequence is that of Adenylosuccinate synthetase from Myxococcus xanthus (strain DK1622).